A 224-amino-acid polypeptide reads, in one-letter code: UPF0758 protein PSPTO_0086 (224 aa).

The region spanning 102-224 (ALENPAQVRN…PLSMVEKGLM (123 aa)) is the MPN domain. Positions 173, 175, and 186 each coordinate Zn(2+). A JAMM motif motif is present at residues 173 to 186 (HNHPSGITTPSRSD).

The protein belongs to the UPF0758 family.

This Pseudomonas syringae pv. tomato (strain ATCC BAA-871 / DC3000) protein is UPF0758 protein PSPTO_0086.